The following is a 336-amino-acid chain: Zinc transporter ZIP11 (336 aa).

The next 7 helical transmembrane spans lie at 12–32 (LLGTLLTWGLTAAGSALVFIF), 44–64 (LGFAAGVMLAASYWSLLAPAI), 75–95 (SFAFVPAAVGFLVGAGFVYLA), 188–208 (IMLLILAITIHNIPEGLAVGV), 258–278 (WYGQLSGMVEPIAGLLGTIAI), 280–300 (LAEPLLPYALAFAAGAMVYVV), and 316–336 (LASWTCIFGFIVMMSLDVGLG).

Belongs to the ZIP transporter (TC 2.A.5) family.

It localises to the cell membrane. The protein resides in the nucleus. Its subcellular location is the cytoplasm. It is found in the golgi apparatus. Functionally, functions as a cellular zinc transporter. In Xenopus tropicalis (Western clawed frog), this protein is Zinc transporter ZIP11 (slc39a11).